The primary structure comprises 377 residues: Succinyl-diaminopimelate desuccinylase (377 aa).

A Zn(2+)-binding site is contributed by His-66. The active site involves Asp-68. Asp-99 is a Zn(2+) binding site. Glu-133 (proton acceptor) is an active-site residue. Positions 134, 163, and 349 each coordinate Zn(2+).

Belongs to the peptidase M20A family. DapE subfamily. In terms of assembly, homodimer. The cofactor is Zn(2+). It depends on Co(2+) as a cofactor.

It catalyses the reaction N-succinyl-(2S,6S)-2,6-diaminopimelate + H2O = (2S,6S)-2,6-diaminopimelate + succinate. It participates in amino-acid biosynthesis; L-lysine biosynthesis via DAP pathway; LL-2,6-diaminopimelate from (S)-tetrahydrodipicolinate (succinylase route): step 3/3. Functionally, catalyzes the hydrolysis of N-succinyl-L,L-diaminopimelic acid (SDAP), forming succinate and LL-2,6-diaminopimelate (DAP), an intermediate involved in the bacterial biosynthesis of lysine and meso-diaminopimelic acid, an essential component of bacterial cell walls. In Legionella pneumophila (strain Lens), this protein is Succinyl-diaminopimelate desuccinylase.